A 274-amino-acid chain; its full sequence is Formamidopyrimidine-DNA glycosylase (274 aa).

The active-site Schiff-base intermediate with DNA is the P2. E3 functions as the Proton donor in the catalytic mechanism. K58 serves as the catalytic Proton donor; for beta-elimination activity. 2 residues coordinate DNA: H91 and R110. The FPG-type zinc-finger motif lies at 238–272; that stretch reads QVYDKTGQECVRCGTIIEKIQLGGRGTHFCPNCQR. R262 serves as the catalytic Proton donor; for delta-elimination activity.

This sequence belongs to the FPG family. As to quaternary structure, monomer. Requires Zn(2+) as cofactor.

It carries out the reaction Hydrolysis of DNA containing ring-opened 7-methylguanine residues, releasing 2,6-diamino-4-hydroxy-5-(N-methyl)formamidopyrimidine.. The enzyme catalyses 2'-deoxyribonucleotide-(2'-deoxyribose 5'-phosphate)-2'-deoxyribonucleotide-DNA = a 3'-end 2'-deoxyribonucleotide-(2,3-dehydro-2,3-deoxyribose 5'-phosphate)-DNA + a 5'-end 5'-phospho-2'-deoxyribonucleoside-DNA + H(+). Functionally, involved in base excision repair of DNA damaged by oxidation or by mutagenic agents. Acts as a DNA glycosylase that recognizes and removes damaged bases. Has a preference for oxidized purines, such as 7,8-dihydro-8-oxoguanine (8-oxoG). Has AP (apurinic/apyrimidinic) lyase activity and introduces nicks in the DNA strand. Cleaves the DNA backbone by beta-delta elimination to generate a single-strand break at the site of the removed base with both 3'- and 5'-phosphates. This is Formamidopyrimidine-DNA glycosylase from Streptococcus pneumoniae serotype 4 (strain ATCC BAA-334 / TIGR4).